The following is a 255-amino-acid chain: UPF0246 protein CC_3385 (255 aa).

This sequence belongs to the UPF0246 family.

This Caulobacter vibrioides (strain ATCC 19089 / CIP 103742 / CB 15) (Caulobacter crescentus) protein is UPF0246 protein CC_3385.